A 132-amino-acid chain; its full sequence is CDGSH iron-sulfur domain-containing protein 2 homolog (132 aa).

Residues 1 to 35 are Lumenal-facing; the sequence is MEPISHVVKSSLPNYLSSLPIPDSFGGWFKLSFKD. A helical transmembrane segment spans residues 36-58; the sequence is WLALIPPTVVVAGLGYTTYLAFC. The Cytoplasmic segment spans residues 59–132; it reads PAARCAGKDS…NVGPVVVKKK (74 aa). [2Fe-2S] cluster is bound by residues C98, C100, C109, and H113.

This sequence belongs to the CISD protein family. CISD2 subfamily. Requires [2Fe-2S] cluster as cofactor.

It is found in the endoplasmic reticulum membrane. In Drosophila persimilis (Fruit fly), this protein is CDGSH iron-sulfur domain-containing protein 2 homolog.